Here is a 243-residue protein sequence, read N- to C-terminus: Pyridoxine 5'-phosphate synthase (243 aa).

Asn-6 provides a ligand contact to 3-amino-2-oxopropyl phosphate. Position 8–9 (8–9 (DH)) interacts with 1-deoxy-D-xylulose 5-phosphate. Residue Arg-17 coordinates 3-amino-2-oxopropyl phosphate. Residue His-42 is the Proton acceptor of the active site. Residues Arg-44 and His-49 each contribute to the 1-deoxy-D-xylulose 5-phosphate site. Residue Glu-72 is the Proton acceptor of the active site. Thr-102 contacts 1-deoxy-D-xylulose 5-phosphate. The active-site Proton donor is His-192. 3-amino-2-oxopropyl phosphate-binding positions include Gly-193 and 214–215 (GH).

Belongs to the PNP synthase family. As to quaternary structure, homooctamer; tetramer of dimers.

The protein resides in the cytoplasm. The enzyme catalyses 3-amino-2-oxopropyl phosphate + 1-deoxy-D-xylulose 5-phosphate = pyridoxine 5'-phosphate + phosphate + 2 H2O + H(+). It functions in the pathway cofactor biosynthesis; pyridoxine 5'-phosphate biosynthesis; pyridoxine 5'-phosphate from D-erythrose 4-phosphate: step 5/5. Functionally, catalyzes the complicated ring closure reaction between the two acyclic compounds 1-deoxy-D-xylulose-5-phosphate (DXP) and 3-amino-2-oxopropyl phosphate (1-amino-acetone-3-phosphate or AAP) to form pyridoxine 5'-phosphate (PNP) and inorganic phosphate. The polypeptide is Pyridoxine 5'-phosphate synthase (Sulfurihydrogenibium sp. (strain YO3AOP1)).